Consider the following 365-residue polypeptide: Endophilin-B1 (365 aa).

Met1 is modified (N-acetylmethionine). Residues 1–30 (MNIMDFNVKKLAADAGTFLSRAVQFTEEKL) are membrane-binding amphipathic helix. Positions 1-37 (MNIMDFNVKKLAADAGTFLSRAVQFTEEKLGQAEKTE) are required for membrane binding. One can recognise a BAR domain in the interval 27 to 261 (EEKLGQAEKT…LGSFPSNYVS (235 aa)). Thr145 carries the phosphothreonine; by CDK5 modification. The stretch at 156–185 (KTIAKERKLLQNKRLDLDAAKTRLKKAKAA) forms a coiled coil. The SH3 domain occupies 305 to 365 (SSTRKARVLY…VPITYLELLN (61 aa)).

The protein belongs to the endophilin family. In terms of assembly, homodimer, and heterodimer with SH3GLB2. Binds BAX; induction of apoptosis augments BAX binding. Binds DNM1, HTT, AMPH, BIN1 and ARFGAP1. Interacts with UVRAG; UVRAG bridges the interaction to BECN1 indicative for an association with the PI3K complex II (PI3KC3-C2). Phosphorylated at Thr-145 by CDK5; this phosphorylation is required for autophagy induction in starved neurons and facilitates homodimerization. As to expression, expressed in brain, heart, lung and spleen. Low level in liver and testis.

It localises to the cytoplasm. The protein resides in the golgi apparatus membrane. Its subcellular location is the mitochondrion outer membrane. It is found in the cytoplasmic vesicle. The protein localises to the autophagosome membrane. It localises to the midbody. May be required for normal outer mitochondrial membrane dynamics. Required for coatomer-mediated retrograde transport in certain cells. May recruit other proteins to membranes with high curvature. May promote membrane fusion. Involved in activation of caspase-dependent apoptosis by promoting BAX/BAK1 activation. Involved in caspase-independent apoptosis during nutrition starvation and involved in the regulation of autophagy. Activates lipid kinase activity of PIK3C3 during autophagy probably by associating with the PI3K complex II (PI3KC3-C2). Associated with PI3KC3-C2 during autophagy may regulate the trafficking of ATG9A from the Golgi complex to the peripheral cytoplasm for the formation of autophagosomes by inducing Golgi membrane tubulation and fragmentation. Involved in regulation of degradative endocytic trafficking and cytokinesis, probably in the context of PI3KC3-C2. This Rattus norvegicus (Rat) protein is Endophilin-B1.